Here is a 1408-residue protein sequence, read N- to C-terminus: ABC multidrug transporter MDR1 (1408 aa).

Residues 79-88 (IAASSDTLRN) are compositionally biased toward polar residues. Residues 79–102 (IAASSDTLRNSPLEKPISNAFSKS) are disordered. Transmembrane regions (helical) follow at residues 147-167 (FAAP…VAAG) and 223-243 (LYLM…MFIW). Positions 157–464 (VLGLVLAVAA…LAPELAAVTK (308 aa)) constitute an ABC transmembrane type-1 1 domain. N-linked (GlcNAc...) asparagine glycosylation is present at Asn-244. A run of 4 helical transmembrane segments spans residues 296 to 316 (KVAL…LAFV), 321 to 341 (LAGA…IMMT), 408 to 428 (IMFF…GILV), and 436 to 456 (GIVI…AMLA). Residues 499 to 744 (ISFENVKFHY…ENGPYAQLVN (246 aa)) form the ABC transporter 1 domain. 534 to 541 (GASGSGKS) is an ATP binding site. An N-linked (GlcNAc...) asparagine glycan is attached at Asn-606. 2 helical membrane passes run 838 to 858 (IIAF…AILF) and 882 to 902 (LWYF…SAGF). The region spanning 838–1125 (IIAFIAAICA…VFTFVPDASK (288 aa)) is the ABC transmembrane type-1 2 domain. An N-linked (GlcNAc...) asparagine glycan is attached at Asn-934. The next 4 membrane-spanning stretches (helical) occupy residues 952–972 (GLFG…IGGC), 981–999 (LLAL…GGYI), 1072–1092 (GLTF…IIDA), and 1099–1119 (FYTV…VFTF). N-linked (GlcNAc...) asparagine glycans are attached at residues Asn-1127 and Asn-1182. Residues 1162-1402 (VRIEGVHFRY…KGGYYELVQM (241 aa)) enclose the ABC transporter 2 domain. Position 1197-1204 (1197-1204 (GPSGCGKS)) interacts with ATP. Asn-1404 is a glycosylation site (N-linked (GlcNAc...) asparagine).

It belongs to the ABC transporter superfamily. ABCB family. Multidrug resistance exporter (TC 3.A.1.201) subfamily.

The protein localises to the cell membrane. It carries out the reaction itraconazole(in) + ATP + H2O = itraconazole(out) + ADP + phosphate + H(+). The enzyme catalyses voriconazole(in) + ATP + H2O = voriconazole(out) + ADP + phosphate + H(+). It catalyses the reaction fluconazole(in) + ATP + H2O = fluconazole(out) + ADP + phosphate + H(+). Pleiotropic ABC efflux transporter that confers resistance to structurally and functionally unrelated compounds including azoles such as fluconazole (FLC), itraconazole (ITC), posaconazole (POS), and voriconazole (VRC). The chain is ABC multidrug transporter MDR1 from Cryptococcus neoformans var. grubii serotype A (strain H99 / ATCC 208821 / CBS 10515 / FGSC 9487) (Filobasidiella neoformans var. grubii).